Here is a 274-residue protein sequence, read N- to C-terminus: Exosome complex component Rrp42 (274 aa).

The protein belongs to the RNase PH family. Rrp42 subfamily. Component of the archaeal exosome complex. Forms a hexameric ring-like arrangement composed of 3 Rrp41-Rrp42 heterodimers. The hexameric ring associates with a trimer of Rrp4 and/or Csl4 subunits.

Its subcellular location is the cytoplasm. Non-catalytic component of the exosome, which is a complex involved in RNA degradation. Contributes to the structuring of the Rrp41 active site. The chain is Exosome complex component Rrp42 from Pyrococcus horikoshii (strain ATCC 700860 / DSM 12428 / JCM 9974 / NBRC 100139 / OT-3).